The chain runs to 458 residues: Exodeoxyribonuclease 7 large subunit (458 aa).

The protein belongs to the XseA family. In terms of assembly, heterooligomer composed of large and small subunits.

It localises to the cytoplasm. It catalyses the reaction Exonucleolytic cleavage in either 5'- to 3'- or 3'- to 5'-direction to yield nucleoside 5'-phosphates.. Its function is as follows. Bidirectionally degrades single-stranded DNA into large acid-insoluble oligonucleotides, which are then degraded further into small acid-soluble oligonucleotides. The chain is Exodeoxyribonuclease 7 large subunit from Escherichia coli O81 (strain ED1a).